The following is a 453-amino-acid chain: Bifunctional protein GlmU (453 aa).

The pyrophosphorylase stretch occupies residues 1-226; it reads MVAVAILAAG…YLEITGINDR (226 aa). UDP-N-acetyl-alpha-D-glucosamine is bound by residues 7-10, Lys-21, Gln-73, and 78-79; these read LAAG and GT. Asp-103 serves as a coordination point for Mg(2+). The UDP-N-acetyl-alpha-D-glucosamine site is built by Gly-140, Glu-155, Asn-170, and Asn-224. Asn-224 lines the Mg(2+) pocket. The interval 227–247 is linker; sequence KQLAMANGILQNRVKDHWMAQ. Residues 248–453 are N-acetyltransferase; the sequence is GVTLIDPDSI…EWKKTIESKK (206 aa). UDP-N-acetyl-alpha-D-glucosamine is bound by residues Arg-329 and Lys-347. The Proton acceptor role is filled by His-359. Tyr-362 and Asn-373 together coordinate UDP-N-acetyl-alpha-D-glucosamine. Acetyl-CoA-binding positions include Ala-376, 382–383, Ala-419, and Arg-436; that span reads NY.

The protein in the N-terminal section; belongs to the N-acetylglucosamine-1-phosphate uridyltransferase family. This sequence in the C-terminal section; belongs to the transferase hexapeptide repeat family. As to quaternary structure, homotrimer. Requires Mg(2+) as cofactor.

It localises to the cytoplasm. The catalysed reaction is alpha-D-glucosamine 1-phosphate + acetyl-CoA = N-acetyl-alpha-D-glucosamine 1-phosphate + CoA + H(+). It catalyses the reaction N-acetyl-alpha-D-glucosamine 1-phosphate + UTP + H(+) = UDP-N-acetyl-alpha-D-glucosamine + diphosphate. Its pathway is nucleotide-sugar biosynthesis; UDP-N-acetyl-alpha-D-glucosamine biosynthesis; N-acetyl-alpha-D-glucosamine 1-phosphate from alpha-D-glucosamine 6-phosphate (route II): step 2/2. It functions in the pathway nucleotide-sugar biosynthesis; UDP-N-acetyl-alpha-D-glucosamine biosynthesis; UDP-N-acetyl-alpha-D-glucosamine from N-acetyl-alpha-D-glucosamine 1-phosphate: step 1/1. It participates in bacterial outer membrane biogenesis; LPS lipid A biosynthesis. Its function is as follows. Catalyzes the last two sequential reactions in the de novo biosynthetic pathway for UDP-N-acetylglucosamine (UDP-GlcNAc). The C-terminal domain catalyzes the transfer of acetyl group from acetyl coenzyme A to glucosamine-1-phosphate (GlcN-1-P) to produce N-acetylglucosamine-1-phosphate (GlcNAc-1-P), which is converted into UDP-GlcNAc by the transfer of uridine 5-monophosphate (from uridine 5-triphosphate), a reaction catalyzed by the N-terminal domain. This is Bifunctional protein GlmU from Rippkaea orientalis (strain PCC 8801 / RF-1) (Cyanothece sp. (strain PCC 8801)).